A 305-amino-acid polypeptide reads, in one-letter code: MLAVRKARRKLRMGTICSPNPSGTKTSSEVCNADWMASLPPHLHNLPLSNLAIPGSHDSFSYWVDEKSPVGPDQTQAIKRLARISLVKKLMKKWSVTQNLTFREQLEAGIRYFDLRVSSKPGDADQEIYFIHGLFGIKVWDGLMEIDSFLTQHPQEIIFLDFNHFYAMDETHHKCLVLRIQEAFGNKLCPACSVESLTLRTLWEKNCQVLIFYHCPFYKQYPFLWPGKKIPAPWANTTSVRKLILFLETTLSERASRGSFHVSQAILTPRVKTIARGLVGGLKNTLVHSNRWNSHGPSLLSQERS.

The 174-residue stretch at 42–215 (HLHNLPLSNL…NCQVLIFYHC (174 aa)) folds into the PI-PLC X-box domain. Residues His57 and His132 contribute to the active site.

Widely expressed.

The protein localises to the nucleus. It carries out the reaction a 1,2-diacyl-sn-glycero-3-phospho-(1D-myo-inositol) + H2O = 1D-myo-inositol 1-phosphate + a 1,2-diacyl-sn-glycerol + H(+). In terms of biological role, catalyzes the hydrolysis of inositol from phosphatidylinositol (1,2-diacyl-sn-glycero-3-phospho-(1D-myo-inositol), PI). Could also hydrolyze various multi-phosphorylated derivatives of PI, such as phosphatidylinositol-4,5 bisphosphate (PIP2), releasing inositol-1,4,5-trisphosphate (IP3) and the protein kinase C activator diacylglycerol (DAG), therefore mediating cell signaling. The protein is PI-PLC X domain-containing protein 2 (PLCXD2) of Homo sapiens (Human).